The primary structure comprises 314 residues: Putative peptide transport system permease protein BRA1092/BS1330_II1084 (314 aa).

The next 6 helical transmembrane spans lie at 12–32 (AIPV…LLPG), 101–121 (LALL…VVAA), 135–155 (LALL…VILF), 177–197 (WLRS…GYLA), 237–257 (VSVL…SVVI), and 286–306 (MLFL…LYTI). The region spanning 95-304 (LPVTISLALL…AINVLVDILY (210 aa)) is the ABC transmembrane type-1 domain.

This sequence belongs to the binding-protein-dependent transport system permease family. The complex is composed of two ATP-binding proteins (BRA1094), two transmembrane proteins (BRA1092 and BRA1093) and a solute-binding protein (BRA1090).

It is found in the cell inner membrane. In terms of biological role, probably part of an ABC transporter complex that could be involved in peptide import. Probably responsible for the translocation of the substrate across the membrane. This is Putative peptide transport system permease protein BRA1092/BS1330_II1084 from Brucella suis biovar 1 (strain 1330).